A 220-amino-acid polypeptide reads, in one-letter code: Small ribosomal subunit protein uS2 (220 aa).

The segment at 201–220 is disordered; that stretch reads LPPDGDLPEPPSEFEVKFKR.

It belongs to the universal ribosomal protein uS2 family.

The polypeptide is Small ribosomal subunit protein uS2 (Staphylothermus marinus (strain ATCC 43588 / DSM 3639 / JCM 9404 / F1)).